Consider the following 713-residue polypeptide: Elongation factor G (713 aa).

Positions 8-290 constitute a tr-type G domain; that stretch reads ERYRNFGIMA…GVIQLLPSPV (283 aa). GTP contacts are provided by residues 17–24, 88–92, and 142–145; these read AHIDAGKT, DTPGH, and NKMD.

The protein belongs to the TRAFAC class translation factor GTPase superfamily. Classic translation factor GTPase family. EF-G/EF-2 subfamily.

The protein localises to the cytoplasm. Catalyzes the GTP-dependent ribosomal translocation step during translation elongation. During this step, the ribosome changes from the pre-translocational (PRE) to the post-translocational (POST) state as the newly formed A-site-bound peptidyl-tRNA and P-site-bound deacylated tRNA move to the P and E sites, respectively. Catalyzes the coordinated movement of the two tRNA molecules, the mRNA and conformational changes in the ribosome. The chain is Elongation factor G from Stenotrophomonas maltophilia (strain K279a).